We begin with the raw amino-acid sequence, 438 residues long: Actin-like protein ARP6 (438 aa).

The segment at 158 to 181 (DIVRGNSDSTNSTSSESKNAQDSG) is disordered. The segment covering 163 to 174 (NSDSTNSTSSES) has biased composition (low complexity).

It belongs to the actin family. ARP6 subfamily. In terms of assembly, component of the SWR1 chromatin remodeling complex composed of at least ACT1, ARP4, RVB1, RVB2, ARP6, YAF9, VPS71, VPS72, SWC3, SWC4, SWC5, SWC7 and SWR1, and perhaps BDF1.

It localises to the cytoplasm. Its subcellular location is the nucleus. Functionally, component of the SWR1 complex which mediates the ATP-dependent exchange of histone H2A for the H2A variant HZT1 leading to transcriptional regulation of selected genes by chromatin remodeling. Involved in chromosome stability. This is Actin-like protein ARP6 (ARP6) from Saccharomyces cerevisiae (strain ATCC 204508 / S288c) (Baker's yeast).